We begin with the raw amino-acid sequence, 1050 residues long: Diacylglycerol kinase iota (1050 aa).

2 disordered regions span residues 52–73 and 325–356; these read NPSS…SGSG and PQNS…ENKG. Positions 332–347 are enriched in basic residues; it reads SNRKKKRTSFKRKASK. Residues 367-502 enclose the DAGKc domain; sequence PLMKPLLVFV…DRWNLHVERN (136 aa). ANK repeat units lie at residues 943-972 and 979-1008; these read GHCS…AELL and TGET…SLRQ. The PDZ-binding motif lies at 1048–1050; sequence TAV.

The protein belongs to the eukaryotic diacylglycerol kinase family. Interacts (via PDZ-binding motif) with DLG4; controls the localization of DGKI to the synapse. Interacts (via PDZ-binding motif) with DLG1. Interacts (via PDZ-binding motif) with DLG2. Interacts (via PDZ-binding motif) with DLG3. May interact with RASGRP3; involved in the regulation of RASGRP3 activity. As to expression, specifically expressed in brain (at protein level). Expressed in hippocampus, cerebellum, brain stem and spinal cord (at protein level). Highly expressed in hippocampus, cerebellar cortex, olfactory bulb, and olfactory tubercle and to lower extent in the cerebral cortex, caudate putamen, and thalamus. Not detected in the white matter. Also expressed in eye. In terms of tissue distribution, major isoform in brain (at protein level). Minor isoform in brain (at protein level). As to expression, expressed in brain (at protein level).

Its subcellular location is the cell projection. The protein resides in the axon. It localises to the dendrite. The protein localises to the presynapse. It is found in the postsynapse. Its subcellular location is the postsynaptic density. The protein resides in the synaptic cell membrane. It localises to the cytoplasmic vesicle. The protein localises to the secretory vesicle. It is found in the synaptic vesicle membrane. Its subcellular location is the cytoplasm. The protein resides in the cytosol. It localises to the nucleus. It catalyses the reaction a 1,2-diacyl-sn-glycerol + ATP = a 1,2-diacyl-sn-glycero-3-phosphate + ADP + H(+). The enzyme catalyses 1,2-di-(9Z-octadecenoyl)-sn-glycerol + ATP = 1,2-di-(9Z-octadecenoyl)-sn-glycero-3-phosphate + ADP + H(+). It carries out the reaction 1-octadecanoyl-2-(9Z,12Z)-octadecadienoyl-sn-glycerol + ATP = 1-octadecanoyl-2-(9Z,12Z-octadecadienoyl)-sn-glycero-3-phosphate + ADP + H(+). The catalysed reaction is 1-octadecanoyl-2-(5Z,8Z,11Z,14Z-eicosatetraenoyl)-sn-glycerol + ATP = 1-octadecanoyl-2-(5Z,8Z,11Z,14Z-eicosatetraenoyl)-sn-glycero-3-phosphate + ADP + H(+). The protein operates within lipid metabolism; glycerolipid metabolism. Its activity is regulated as follows. Activated by phosphatidylserine. In terms of biological role, diacylglycerol kinase that converts diacylglycerol/DAG into phosphatidic acid/phosphatidate/PA and regulates the respective levels of these two bioactive lipids. Thereby, acts as a central switch between the signaling pathways activated by these second messengers with different cellular targets and opposite effects in numerous biological processes. Has probably no preference for any of the diacylglycerols in terms of the acyl chain composition, especially for the acyl chain at the sn-2 position. By controlling the diacylglycerol/DAG-mediated activation of RASGRP3, negatively regulates the Rap1 signaling pathway. May play a role in presynaptic diacylglycerol/DAG signaling and control neurotransmitter release during metabotropic glutamate receptor-dependent long-term depression. Has a decreased affinity for ATP and a reduced diacylglycerol kinase activity. Has no preference for any of the diacylglycerols in terms of the acyl chain composition. Functionally, has no diacylglycerol kinase activity. This chain is Diacylglycerol kinase iota, found in Rattus norvegicus (Rat).